We begin with the raw amino-acid sequence, 459 residues long: Alcohol acyl transferase 1 allele RGc (459 aa).

Residues His-164 and Asn-385 each act as proton acceptor in the active site.

Belongs to the plant acyltransferase family. In terms of tissue distribution, expressed at very low levels in the skin of ripe fruit.

Functionally, involved in the biosynthesis of volatile esters which confer ripe apple fruit flavor. Alcohol acyl transferase that can use a wide range of alcohols as substrate to produce esters. In Malus domestica (Apple), this protein is Alcohol acyl transferase 1 allele RGc.